The following is a 411-amino-acid chain: Lissencephaly-1 homolog (411 aa).

The 33-residue stretch at 9 to 41 (QREELNQAIADYLGSNGYADSLETFRKEADLST) folds into the LisH domain. A coiled-coil region spans residues 56 to 83 (TSVIRLQKKVMDLEAKLTEAEKEVIEGA). 7 WD repeats span residues 106–147 (GHRA…RSLK), 148–187 (GHTD…ECVK), 191–230 (GHDH…CVKT), 233–272 (GHRE…CKVE), 275–334 (DHEH…CLLT), 337–376 (GHDN…CMKT), and 379–411 (AHQH…WECR).

Belongs to the WD repeat LIS1/nudF family.

It is found in the cytoplasm. It localises to the cytoskeleton. The protein localises to the microtubule organizing center. The protein resides in the centrosome. Its function is as follows. Positively regulates the activity of the minus-end directed microtubule motor protein dynein. May enhance dynein-mediated microtubule sliding by targeting dynein to the microtubule plus end. Required for several dynein- and microtubule-dependent processes. This Drosophila mojavensis (Fruit fly) protein is Lissencephaly-1 homolog.